The primary structure comprises 630 residues: MTVARNRAGAGPGKGSPISSFADKTFTDPARIRNFCIIAHIDHGKSTLADRMLQLTGVVEERQMRAQYLDRMDIERERGITIKAQNVRLPWKVGDEEFVIHLIDTPGHVDFTYEVSRALEACEGAVLLVDAAQGIEAQTLANLYLAMEKDLTIIPVLNKIDLPAADPDRYAEEIAHITGCEPGDVLRVSGKTGIGVKELLDEVVRQVPAPVGDPDGPARAMIFDSVYDAYRGVVTYVRVVDGRISPREKITMMSTGTTHDLIEVGIISPEPKASIGLGVGEVGYLITGVKDVRQSRVGDTVTAARGGATEPLVGYRDPKPMVYSGLYPLDGSDYPVLRDALDKLRLNDAALAYEPETSVALGFGFRCGFLGLLHMEITRDRLEREFGLELISTSPNVVYRVVMEDGSEHVVTNPSYWPEGKIREVYEPMVKCTIIAPSEFIGAIMELCQNRRGELGGMDYLSETRVELRYEMPMGEIMFDFFDALKSRTKGYASLDYEESGEQQADLVKVDILLQGEAVDAFSSIVHRSAAGAYGGRMTSKLRELIPRQQFEVPIQAAIGSKIISRENIRAIRKDVLAKCYGGDISRKRKLLEKQKEGKKRMKTIGRVEVPQEAFVAALSSESVGDKPKK.

The tract at residues Met-1–Ala-22 is disordered. The 182-residue stretch at Ala-30 to Val-211 folds into the tr-type G domain. Residues Asp-42–Thr-47 and Asn-158–Asp-161 each bind GTP.

Belongs to the TRAFAC class translation factor GTPase superfamily. Classic translation factor GTPase family. LepA subfamily.

It is found in the cell membrane. It catalyses the reaction GTP + H2O = GDP + phosphate + H(+). Its function is as follows. Required for accurate and efficient protein synthesis under certain stress conditions. May act as a fidelity factor of the translation reaction, by catalyzing a one-codon backward translocation of tRNAs on improperly translocated ribosomes. Back-translocation proceeds from a post-translocation (POST) complex to a pre-translocation (PRE) complex, thus giving elongation factor G a second chance to translocate the tRNAs correctly. Binds to ribosomes in a GTP-dependent manner. This chain is Elongation factor 4, found in Rhodococcus jostii (strain RHA1).